Here is a 383-residue protein sequence, read N- to C-terminus: MSATLKLTEALIACHSVTPADGGCQDLIAKRLQAIGFHAESVVSGPENFQVTNLWAIKKGKAGDQGKVLMFAGHTDVVPTGPLEKWTSDPFTPTIRDGMLYGRGAADMKTSLASFVVATEEFVTTHPDHQGSIAFLITSDEEGPANDGTVIMCERLQKHGQRLDYCVIGEPTSVNTLGDMIKNGRRGSLSGKLRVKGIQAHIAYPHLGQNPIHLSAPAISALVETQWDKGNEYFQPTSFQISNVHAGTGANNVIPGKLVVDFNFRFSTESKPEQLRERLEKILKDAGLEFEIDWVLGGSPFITGDGDLAGALRKAIKAETKIDTELSTTGGTSDGRFIAKICKEVVEFGPLNATSHKIDECVIVDDVVPLKNIYRKTLEQLIA.

Histidine 74 contributes to the Zn(2+) binding site. Aspartate 76 is an active-site residue. Residue aspartate 107 participates in Zn(2+) binding. Glutamate 141 acts as the Proton acceptor in catalysis. Positions 142, 170, and 356 each coordinate Zn(2+).

This sequence belongs to the peptidase M20A family. DapE subfamily. As to quaternary structure, homodimer. Zn(2+) is required as a cofactor. Co(2+) serves as cofactor.

It carries out the reaction N-succinyl-(2S,6S)-2,6-diaminopimelate + H2O = (2S,6S)-2,6-diaminopimelate + succinate. It functions in the pathway amino-acid biosynthesis; L-lysine biosynthesis via DAP pathway; LL-2,6-diaminopimelate from (S)-tetrahydrodipicolinate (succinylase route): step 3/3. Functionally, catalyzes the hydrolysis of N-succinyl-L,L-diaminopimelic acid (SDAP), forming succinate and LL-2,6-diaminopimelate (DAP), an intermediate involved in the bacterial biosynthesis of lysine and meso-diaminopimelic acid, an essential component of bacterial cell walls. The chain is Succinyl-diaminopimelate desuccinylase from Polynucleobacter necessarius subsp. necessarius (strain STIR1).